Consider the following 407-residue polypeptide: Aurora kinase A-A (407 aa).

Residues 1–10 (MERAVKENHK) show a composition bias toward basic and acidic residues. Residues 1–130 (MERAVKENHK…KTSAVPKEEG (130 aa)) form a disordered region. Composition is skewed to polar residues over residues 67–77 (ILSSQKPTTQI) and 84–110 (QGHQ…STPN). The 251-residue stretch at 140-390 (FEIGRPLGKG…LKGVLEHPWI (251 aa)) folds into the Protein kinase domain. ATP is bound by residues K150, K169, and 217–220 (LDYA). Residue D263 is the Proton acceptor of the active site. Position 281 (D281) interacts with ATP. Residues 287–300 (HAPSSRRTTLCGTL) are activation segment.

It belongs to the protein kinase superfamily. Ser/Thr protein kinase family. Aurora subfamily. As to quaternary structure, interacts with kif2c and kif11. In terms of processing, phosphorylated. Autophosphorylated on a serine residue. In terms of tissue distribution, highly expressed in ovary and testis.

The protein localises to the cytoplasm. It localises to the cytoskeleton. It is found in the spindle. The protein resides in the microtubule organizing center. Its subcellular location is the centrosome. The catalysed reaction is L-seryl-[protein] + ATP = O-phospho-L-seryl-[protein] + ADP + H(+). It carries out the reaction L-threonyl-[protein] + ATP = O-phospho-L-threonyl-[protein] + ADP + H(+). Its function is as follows. Mitotic serine/threonine kinases that contributes to the regulation of cell cycle progression. Associates with the centrosome and the spindle microtubules during mitosis and plays a critical role in various mitotic events including the establishment of mitotic spindle, centrosome duplication, centrosome separation as well as maturation, chromosomal alignment, spindle assembly checkpoint, and cytokinesis. Phosphorylates numerous target proteins. Important for microtubule formation and/or stabilization. The protein is Aurora kinase A-A (aurka-a) of Xenopus laevis (African clawed frog).